The chain runs to 183 residues: Endoribonuclease YbeY (183 aa).

3 residues coordinate Zn(2+): His142, His146, and His152.

This sequence belongs to the endoribonuclease YbeY family. The cofactor is Zn(2+).

The protein resides in the cytoplasm. Single strand-specific metallo-endoribonuclease involved in late-stage 70S ribosome quality control and in maturation of the 3' terminus of the 16S rRNA. In Trichodesmium erythraeum (strain IMS101), this protein is Endoribonuclease YbeY.